Consider the following 365-residue polypeptide: IgG receptor FcRn large subunit p51 (365 aa).

Residues 1–23 form the signal peptide; that stretch reads MGVPRPQPWALGLLLFLLPGSLG. The interval 24 to 110 is alpha-1; sequence AESHLSLLYH…AFKALGGKGP (87 aa). Residues 24 to 297 are Extracellular-facing; it reads AESHLSLLYH…VELESPAKSS (274 aa). Residues 111-200 are alpha-2; the sequence is YTLQGLLGCE…ERGRGNLEWK (90 aa). 2 disulfide bridges follow: Cys-119/Cys-182 and Cys-221/Cys-275. N-linked (GlcNAc...) asparagine glycosylation is present at Asn-125. The segment at 201 to 290 is alpha-3; the sequence is EPPSMRLKAR…GLAQPLRVEL (90 aa). In terms of domain architecture, Ig-like C1-type spans 202-289; it reads PPSMRLKARP…AGLAQPLRVE (88 aa). Positions 291 to 297 are connecting peptide; sequence ESPAKSS. A helical membrane pass occupies residues 298-321; the sequence is VLVVGIVIGVLLLTAAAVGGALLW. Residues 322 to 365 are Cytoplasmic-facing; the sequence is RRMRSGLPAPWISLRGDDTGVLLPTPGEAQDADLKDVNVIPATA. Position 334 is a phosphoserine (Ser-334).

This sequence belongs to the immunoglobulin superfamily. In terms of assembly, fcRn complex consists of two subunits: p51, and p14 which is equivalent to beta-2-microglobulin. It forms an MHC class I-like heterodimer. Interacts with albumin/ALB; this interaction regulates ALB homeostasis. As to quaternary structure, (Microbial infection) Interacts with Echovirus 6, Echovirus 11 and Echovirus 30 capsid protein VP1. In terms of tissue distribution, expressed in full-term placenta, heart, lung, liver, muscle, kidney, pancreas, and both fetal and adult small intestine.

It localises to the cell membrane. It is found in the endosome membrane. Cell surface receptor that transfers passive humoral immunity from the mother to the newborn. Binds to the Fc region of monomeric immunoglobulin gamma and mediates its selective uptake from milk. IgG in the milk is bound at the apical surface of the intestinal epithelium. The resultant FcRn-IgG complexes are transcytosed across the intestinal epithelium and IgG is released from FcRn into blood or tissue fluids. Throughout life, contributes to effective humoral immunity by recycling IgG and extending its half-life in the circulation. Mechanistically, monomeric IgG binding to FcRn in acidic endosomes of endothelial and hematopoietic cells recycles IgG to the cell surface where it is released into the circulation. In addition of IgG, regulates homeostasis of the other most abundant circulating protein albumin/ALB. Its function is as follows. (Microbial infection) Acts as an uncoating receptor for a panel of echoviruses including Echovirus 5, 6, 7, 9, 11, 13, 25 and 29. The sequence is that of IgG receptor FcRn large subunit p51 (FCGRT) from Homo sapiens (Human).